Here is a 475-residue protein sequence, read N- to C-terminus: L-ornithine N(5)-monooxygenase (475 aa).

FAD contacts are provided by residues Glu-65–His-73 and Gln-84. Lys-89 is a substrate binding site. Val-150 lines the FAD pocket. An NADP(+)-binding site is contributed by Gly-238–Ser-241. Substrate-binding positions include Asn-277 to Phe-280 and Asn-307. Asn-307 to Gly-309 is an NADP(+) binding site. Ser-446–Leu-448 serves as a coordination point for FAD. Ser-449 serves as a coordination point for substrate.

This sequence belongs to the lysine N(6)-hydroxylase/L-ornithine N(5)-oxygenase family. Homotetramer. FAD serves as cofactor.

The enzyme catalyses L-ornithine + NADPH + O2 = N(5)-hydroxy-L-ornithine + NADP(+) + H2O. It catalyses the reaction L-ornithine + NADH + O2 = N(5)-hydroxy-L-ornithine + NAD(+) + H2O. Its pathway is siderophore biosynthesis. Functionally, L-ornithine N(5)-monooxygenase; part of the gene cluster that mediates the biosynthesis of hydroxamate-containing siderophores that play a critical role in virulence via intracellular iron acquisition during macrophage infection. SID1 catalyzes the conversion of L-ornithine to N(5)-hydroxyornithine, the first step in the biosynthesis of all hydroxamate-containing siderophores. The protein is L-ornithine N(5)-monooxygenase of Ajellomyces capsulatus (Darling's disease fungus).